We begin with the raw amino-acid sequence, 266 residues long: Undecaprenyl-diphosphatase (266 aa).

8 helical membrane passes run 1 to 21 (MDTFQVIILALIQGLTEFLPI), 39 to 59 (QGLSFDVAVNTGSLLAVVMYF), 87 to 107 (WWIILATIPAVIVGFTAKGFI), 111 to 131 (LRNIEVIAATTIIFGLLLWWA), 144 to 164 (VGWKKALVIGLAQAMALIPGT), 183 to 203 (AAARFSFLMSVPVSLGAAILV), 218 to 238 (ALGLGIVVSFIAAYVCIHYFL), and 246 to 266 (MTPFVIYRLVLGAVLCGFIFL).

Belongs to the UppP family.

Its subcellular location is the cell inner membrane. It carries out the reaction di-trans,octa-cis-undecaprenyl diphosphate + H2O = di-trans,octa-cis-undecaprenyl phosphate + phosphate + H(+). In terms of biological role, catalyzes the dephosphorylation of undecaprenyl diphosphate (UPP). Confers resistance to bacitracin. The protein is Undecaprenyl-diphosphatase of Shewanella piezotolerans (strain WP3 / JCM 13877).